We begin with the raw amino-acid sequence, 288 residues long: Serine/threonine-protein kinase pef1 (288 aa).

The Protein kinase domain occupies 3–285 (YQRLEKLGEG…GQDALQHAWF (283 aa)). ATP-binding positions include 9–17 (LGEGTYAHV) and K32. A Phosphothreonine modification is found at T13. Residue Y14 is modified to Phosphotyrosine. D126 functions as the Proton acceptor in the catalytic mechanism.

The protein belongs to the protein kinase superfamily. CMGC Ser/Thr protein kinase family. CDC2/CDKX subfamily. As to quaternary structure, interacts with the pas1 cyclin.

It catalyses the reaction L-seryl-[protein] + ATP = O-phospho-L-seryl-[protein] + ADP + H(+). The catalysed reaction is L-threonyl-[protein] + ATP = O-phospho-L-threonyl-[protein] + ADP + H(+). The polypeptide is Serine/threonine-protein kinase pef1 (pef1) (Schizosaccharomyces pombe (strain 972 / ATCC 24843) (Fission yeast)).